A 289-amino-acid chain; its full sequence is MALKEEIFDQNTTLFAVLDENEVTEIKSIQSSVTAVKTQLDQQKLQLDGLAKVVDNNQARNEEQFVNINTTLVEMSSEVDKLTITTSQQAKQINTLATTLNELDQTTKDSLDTLNTTTESLKKQVLFNTDEITVLKVDVATVTQKQQDVEHSLVTMKDEIGELHVSVNANANSIEALRTRIAALEIRDVGPWVLKDRIYKFVINKPNGTTRYTTIYFFADVYYSTGVRAAPTNSGTATSILTITSLTTSYSLANVPVLKGVPYRVNGYFANGNNIEDITGSTSVIYDSM.

This is an uncharacterized protein from Drosophila melanogaster (Fruit fly).